The following is a 375-amino-acid chain: Tyrosine--tRNA ligase (375 aa).

L-tyrosine-binding residues include Y37, Y168, Q172, D175, and Q190. The 'KMSKS' region motif lies at K251–S255. ATP is bound at residue K254.

The protein belongs to the class-I aminoacyl-tRNA synthetase family. TyrS type 4 subfamily. As to quaternary structure, homodimer.

The protein localises to the cytoplasm. It carries out the reaction tRNA(Tyr) + L-tyrosine + ATP = L-tyrosyl-tRNA(Tyr) + AMP + diphosphate + H(+). Functionally, catalyzes the attachment of tyrosine to tRNA(Tyr) in a two-step reaction: tyrosine is first activated by ATP to form Tyr-AMP and then transferred to the acceptor end of tRNA(Tyr). This chain is Tyrosine--tRNA ligase, found in Thermococcus gammatolerans (strain DSM 15229 / JCM 11827 / EJ3).